Reading from the N-terminus, the 534-residue chain is ATP-dependent rRNA helicase RRP3 (534 aa).

Positions 67–107 (KQQALQKQQKQQKQQEQENANHNQTESSLSSSSSTTSSSIT) are disordered. Composition is skewed to low complexity over residues 68 to 80 (QQALQKQQKQQKQ) and 91 to 107 (TESSLSSSSSTTSSSIT). Residues 118–146 (KTFKELNLVPDLLESIESMKFTKPTPIQS) carry the Q motif motif. A Helicase ATP-binding domain is found at 149-320 (IPHALEGKDI…RASLHNPVRV (172 aa)). 162-169 (AQTGSGKT) is a binding site for ATP. A DEAD box motif is present at residues 268-271 (DEAD). In terms of domain architecture, Helicase C-terminal spans 347-492 (ILIHLLNEFM…EDKPPKEVLD (146 aa)). 2 stretches are compositionally biased toward basic and acidic residues: residues 505-517 (AIRQTKEIHDKRN) and 525-534 (NRDDADREER). Residues 505–534 (AIRQTKEIHDKRNGGGGRRRNRDDADREER) form a disordered region.

This sequence belongs to the DEAD box helicase family. DDX47/RRP3 subfamily. Interacts with the SSU processome.

The protein localises to the nucleus. It carries out the reaction ATP + H2O = ADP + phosphate + H(+). ATP-dependent rRNA helicase required for pre-ribosomal RNA processing. Involved in the maturation of the 35S-pre-rRNA and to its cleavage to mature 18S rRNA. In Candida albicans (strain SC5314 / ATCC MYA-2876) (Yeast), this protein is ATP-dependent rRNA helicase RRP3.